The following is a 366-amino-acid chain: Protein FAM131A (366 aa).

Positions 342–366 (QRQASDLASSGVVSLDEDEAEPEEQ) are disordered. The span at 356-366 (LDEDEAEPEEQ) shows a compositional bias: acidic residues.

This sequence belongs to the FAM131 family.

This is Protein FAM131A (FAM131A) from Homo sapiens (Human).